A 322-amino-acid polypeptide reads, in one-letter code: tRNA uridine(34) hydroxylase (322 aa).

The Rhodanese domain maps to 126 to 220 (LAEDTVVIDA…YGKDPEVKGE (95 aa)). The active-site Cysteine persulfide intermediate is the C180.

Belongs to the TrhO family.

It catalyses the reaction uridine(34) in tRNA + AH2 + O2 = 5-hydroxyuridine(34) in tRNA + A + H2O. In terms of biological role, catalyzes oxygen-dependent 5-hydroxyuridine (ho5U) modification at position 34 in tRNAs. The chain is tRNA uridine(34) hydroxylase from Shouchella clausii (strain KSM-K16) (Alkalihalobacillus clausii).